The following is a 400-amino-acid chain: Large envelope protein (400 aa).

Position 1 is an N-acetylmethionine (Met-1). A lipid anchor (N-myristoyl glycine; by host) is attached at Gly-2. A pre-S1 region spans residues 2-119 (GGWSSKPRKG…PPLRDTHPQA (118 aa)). The tract at residues 2 to 174 (GGWSSKPRKG…LSKTGDPVPN (173 aa)) is pre-S. Residues 2-181 (GGWSSKPRKG…VPNMENISSG (180 aa)) are Virion surface; in external conformation-facing. At 2–253 (GGWSSKPRKG…PGYRWMCLRR (252 aa)) the chain is on the intravirion; in internal conformation side. Trp-4 carries an N-linked (GlcNAc...) asparagine glycan. Disordered stretches follow at residues 29–50 (QLDPAFKANSDNPDWDLNPHKD) and 85–118 (LTTVPAAPPPASTSRQSGRQPTPLSPPLRDTHPQ). Residues 96 to 106 (STSRQSGRQPT) show a composition bias toward polar residues. Residues 120 to 174 (MQWNSTTFHQTLQDPRVRALYFPAGGSSSGTVSPAQNTVSAISSTLSKTGDPVPN) are pre-S2. The helical transmembrane segment at 182 to 202 (LLGPLLVLQAGFFLLTKILTI) threads the bilayer. The Intravirion; in external conformation segment spans residues 203-253 (PQSLDSWWTSLNFLGQTPVCLGQNSQSQISSHSLTCCPPICPGYRWMCLRR). The helical transmembrane segment at 254–274 (FIIFLCILLLCLIFLLVLLDC) threads the bilayer. Residues 275 to 348 (QGMLPVCPLI…WASVRFSWLS (74 aa)) are Virion surface-facing. The N-linked (GlcNAc...) asparagine; by host glycan is linked to Asn-320. A helical membrane pass occupies residues 349–369 (LLVPFVQWFVGLSPTVWLSVI). The Intravirion portion of the chain corresponds to 370–375 (WMMWFW). The chain crosses the membrane as a helical span at residues 376 to 398 (GPSLCNILSPFMPLLPIFFCLWV). Topologically, residues 399 to 400 (YI) are virion surface.

The protein belongs to the orthohepadnavirus major surface antigen family. In terms of assembly, interacts (via its myristoylated pre-S1 region) with the host SLC10A1/NTCP; this interaction is essential for viral entry. As to quaternary structure, in its internal form (Li-HBsAg), interacts with the capsid protein and with the isoform S. Interacts with host chaperone CANX. Associates with host chaperone CANX through its pre-S2 N glycan; this association may be essential for isoform M proper secretion. In terms of assembly, interacts with isoform L. Interacts with the antigens of satellite virus HDV (HDVAgs); this interaction is required for encapsidation of HDV genomic RNA. Isoform M is N-terminally acetylated by host at a ratio of 90%, and N-glycosylated by host at the pre-S2 region. Post-translationally, myristoylated; this modification is essential for its interaction with the host protein SLC10A1/NTCP.

Its subcellular location is the virion membrane. Functionally, the large envelope protein exists in two topological conformations, one which is termed 'external' or Le-HBsAg and the other 'internal' or Li-HBsAg. In its external conformation the protein attaches the virus to cell receptors and thereby initiating infection. This interaction determines the species specificity and liver tropism. This attachment induces virion internalization predominantly through caveolin-mediated endocytosis. The large envelope protein also assures fusion between virion membrane and endosomal membrane. In its internal conformation the protein plays a role in virion morphogenesis and mediates the contact with the nucleocapsid like a matrix protein. Its function is as follows. The middle envelope protein plays an important role in the budding of the virion. It is involved in the induction of budding in a nucleocapsid independent way. In this process the majority of envelope proteins bud to form subviral lipoprotein particles of 22 nm of diameter that do not contain a nucleocapsid. The chain is Large envelope protein from Homo sapiens (Human).